The sequence spans 852 residues: Leucine--tRNA ligase (852 aa).

A 'HIGH' region motif is present at residues 51–61 (PYPSGDLHMGH). Residues 615-619 (KMSKS) carry the 'KMSKS' region motif. Lysine 618 is an ATP binding site.

This sequence belongs to the class-I aminoacyl-tRNA synthetase family.

The protein resides in the cytoplasm. It catalyses the reaction tRNA(Leu) + L-leucine + ATP = L-leucyl-tRNA(Leu) + AMP + diphosphate. The chain is Leucine--tRNA ligase from Clavibacter sepedonicus (Clavibacter michiganensis subsp. sepedonicus).